We begin with the raw amino-acid sequence, 119 residues long: Nucleoid-associated protein Cphy_0047 (119 aa).

A disordered region spans residues 23 to 45 (AQRMQKQMEDKTKEMEEKQWEAT). Positions 28–42 (KQMEDKTKEMEEKQW) are enriched in basic and acidic residues.

The protein belongs to the YbaB/EbfC family. Homodimer.

It localises to the cytoplasm. The protein localises to the nucleoid. Functionally, binds to DNA and alters its conformation. May be involved in regulation of gene expression, nucleoid organization and DNA protection. The polypeptide is Nucleoid-associated protein Cphy_0047 (Lachnoclostridium phytofermentans (strain ATCC 700394 / DSM 18823 / ISDg) (Clostridium phytofermentans)).